A 370-amino-acid polypeptide reads, in one-letter code: Phospho-2-dehydro-3-deoxyheptonate aldolase, tyrosine-inhibited (370 aa).

Belongs to the class-I DAHP synthase family.

The enzyme catalyses D-erythrose 4-phosphate + phosphoenolpyruvate + H2O = 7-phospho-2-dehydro-3-deoxy-D-arabino-heptonate + phosphate. The protein operates within metabolic intermediate biosynthesis; chorismate biosynthesis; chorismate from D-erythrose 4-phosphate and phosphoenolpyruvate: step 1/7. With respect to regulation, inhibited by tyrosine. Stereospecific condensation of phosphoenolpyruvate (PEP) and D-erythrose-4-phosphate (E4P) giving rise to 3-deoxy-D-arabino-heptulosonate-7-phosphate (DAHP). This Candida albicans (strain SC5314 / ATCC MYA-2876) (Yeast) protein is Phospho-2-dehydro-3-deoxyheptonate aldolase, tyrosine-inhibited (ARO4).